We begin with the raw amino-acid sequence, 606 residues long: Gamma-aminobutyric acid receptor subunit beta (606 aa).

Residues 1–44 (MSDSKMDKLARMAPLPRTPLLTIWLAINMALIAQETGHKRIHTV) form the signal peptide. The Extracellular portion of the chain corresponds to 45–268 (QAATGGGSML…CEIQFVRSMG (224 aa)). An N-linked (GlcNAc...) asparagine glycan is attached at Asn-58. An intrachain disulfide couples Cys-185 to Cys-199. Asn-253 is a glycosylation site (N-linked (GlcNAc...) asparagine). The next 3 helical transmembrane spans lie at 269–291 (YYLI…SFWL), 297–316 (PARV…LMSS), and 333–356 (YLGT…YMAK). The Cytoplasmic portion of the chain corresponds to 357 to 568 (RIQMRKQRFM…LGITPSDIDK (212 aa)). Disordered stretches follow at residues 376–451 (KQQL…VSNR) and 482–542 (HDPK…AAVP). Positions 381-395 (GANQQQANPNPNANV) are enriched in low complexity. Positions 396 to 425 (GGPGGVGVGPGGPGGPGGGVNVGVGMGMGP) are enriched in gly residues. A compositionally biased stretch (basic residues) spans 430 to 443 (GHGHHAHSHGHPHA). The span at 499-536 (GGRGGPQSHGPGPGQGGGPPGGGGGGGGGGGPPEGGGD) shows a compositional bias: gly residues. Residues 569 to 590 (YSRIVFPVCFVCFNLMYWIIYL) traverse the membrane as a helical segment.

The protein belongs to the ligand-gated ion channel (TC 1.A.9) family. Gamma-aminobutyric acid receptor (TC 1.A.9.5) subfamily. In terms of assembly, forms oligomers. Interacts with Nlg4; the interaction mediates Rdl clustering. Interacts with Fbxl4; the interaction mediates Rdl degradation. As to expression, expressed in different parts of the brain: the mushroom bodies (alpha, alpha', beta, beta', gamma lobes and peduncles), the neurons projecting to the columnar-type neuron LC9 optic glomerulus, in interneurons connecting the paired olfactory lobes, antennal lobes, PDF-expressing small and large ventral lateral neurons (LNvs) of the circadian clock and lobula columnar neuron 11 (LC11) (at protein level). Expressed in all major ON pathway medulla neurons (Mi1, Tm3, Mi4, and Mi9) and in OFF pathway neurons (Tm1, Tm2, Tm4, and Tm9).

Its subcellular location is the cell membrane. It localises to the postsynaptic cell membrane. It is found in the cell projection. The protein resides in the dendrite. The protein localises to the axon. With respect to regulation, activated by agonist muscimol. Insensitive to zinc, glycine, glutamate, and baclofen, loreclezole, to antagonist bicuculline, glycine-receptor antagonist strychnine, and nonselective GABA and glycine antagonist RU 5135. Insensitive to flunitrazepam, pentobarbitone or pregnane steroids such as 5alpha-pregnan-3alpha-ol-20-one. Inhibited by insecticides picrotoxin (PTX), cyclodiene dieldrin, TBPS and lindane. Inhibited by ivermectin, fipronil and pyrafluprole. Its activity is regulated as follows. Inhibited by insecticides picrotoxin (PTX). Its function is as follows. Gamma-aminobutyric acid (GABA) receptor voltage channel subunit. GABA, an inhibitory neurotransmitter, mediates neuronal inhibition by binding to the GABA receptor and opening an integral chloride channel. Together with glutamate receptor GluClalpha, plays an important role in the visual response by regulating the activity of ON/OFF-selective neurons. Plays a role in promoting sleep and sleep latency by regulating the activity of peptidergic PDF neurons. In large ventral lateral clock neurons, clustering is mediated by Nlg4 and protein levels undergo daily degradation in response to the circadian clock. In neurons in the mushroom bodies, has a role in odor memory acquisition where it inhibits appetitive and aversive olfactory learning, probably upstream of Adcy1/adenylate cyclase 1 and GTPase activating protein Nf1. In male-specific GABAergic neurons, plays a role in inhibiting male aggressive behavior during courtship. Gamma-aminobutyric acid (GABA) receptor voltage channel subunit. The protein is Gamma-aminobutyric acid receptor subunit beta (Rdl) of Drosophila melanogaster (Fruit fly).